Consider the following 509-residue polypeptide: Heat shock 70 kDa protein 14 (509 aa).

This sequence belongs to the heat shock protein 70 family. Component of ribosome-associated complex (RAC), a heterodimer composed of Hsp70/DnaK-type chaperone HSPA14 and Hsp40/DnaJ-type chaperone DNAJC2.

Its subcellular location is the cytoplasm. The protein resides in the cytosol. Its function is as follows. Component of the ribosome-associated complex (RAC), a complex involved in folding or maintaining nascent polypeptides in a folding-competent state. In the RAC complex, binds to the nascent polypeptide chain, while DNAJC2 stimulates its ATPase activity. In Pongo abelii (Sumatran orangutan), this protein is Heat shock 70 kDa protein 14 (HSPA14).